Reading from the N-terminus, the 65-residue chain is Large ribosomal subunit protein bL35 (65 aa).

The interval Met1 to Leu65 is disordered. Basic residues predominate over residues Ala10–Leu44. Residues Val50–Leu65 are compositionally biased toward basic and acidic residues.

It belongs to the bacterial ribosomal protein bL35 family.

The sequence is that of Large ribosomal subunit protein bL35 from Xylella fastidiosa (strain M12).